A 483-amino-acid polypeptide reads, in one-letter code: Cysteine--tRNA ligase (483 aa).

Cys29 contributes to the Zn(2+) binding site. Residues 31 to 41 (ITVYDYCHLGH) carry the 'HIGH' region motif. Residues Cys215, His240, and Glu244 each contribute to the Zn(2+) site. Residues 272–276 (KMSKS) carry the 'KMSKS' region motif. Position 275 (Lys275) interacts with ATP.

The protein belongs to the class-I aminoacyl-tRNA synthetase family. As to quaternary structure, monomer. The cofactor is Zn(2+).

The protein resides in the cytoplasm. It carries out the reaction tRNA(Cys) + L-cysteine + ATP = L-cysteinyl-tRNA(Cys) + AMP + diphosphate. The polypeptide is Cysteine--tRNA ligase (cysS) (Synechocystis sp. (strain ATCC 27184 / PCC 6803 / Kazusa)).